A 183-amino-acid chain; its full sequence is Capsid protein (183 aa).

The interval 136–183 is disordered; sequence NAPILSTLPETTVVRRRGRSPRRRTPSPRRRRSQSPRRRRSQSPASQC. The span at 149–176 shows a compositional bias: basic residues; that stretch reads VRRRGRSPRRRTPSPRRRRSQSPRRRRS. 3 positions are modified to phosphoserine; by host: S155, S162, and S170. One copy of the 1; half-length repeat lies at 155–161; it reads SPRRRTP. The 3 X 8 AA repeats of S-P-R-R-R-[PR]-S-Q stretch occupies residues 155 to 177; the sequence is SPRRRTPSPRRRRSQSPRRRRSQ. Positions 158–175 match the Bipartite nuclear localization signal motif; it reads RRTPSPRRRRSQSPRRRR. A run of 2 repeats spans residues 162 to 169 and 170 to 177. Residues 177-183 form an RNA binding region; the sequence is QSPASQC.

Belongs to the orthohepadnavirus core antigen family. Homodimerizes, then multimerizes. Interacts with cytosol exposed regions of viral L glycoprotein present in the reticulum-to-Golgi compartment. Interacts with human FLNB. Phosphorylated form interacts with host importin alpha; this interaction depends on the exposure of the NLS, which itself depends upon genome maturation and/or phosphorylation of the capsid protein. Interacts with host NUP153. In terms of processing, phosphorylated by host SRPK1, SRPK2, and maybe protein kinase C or GAPDH. Phosphorylation is critical for pregenomic RNA packaging. Protein kinase C phosphorylation is stimulated by HBx protein and may play a role in transport of the viral genome to the nucleus at the late step during the viral replication cycle.

It is found in the virion. Its subcellular location is the host cytoplasm. Its function is as follows. Self assembles to form an icosahedral capsid. Most capsids appear to be large particles with an icosahedral symmetry of T=4 and consist of 240 copies of capsid protein, though a fraction forms smaller T=3 particles consisting of 180 capsid proteins. Entering capsids are transported along microtubules to the nucleus. Phosphorylation of the capsid is thought to induce exposure of nuclear localization signal in the C-terminal portion of the capsid protein that allows binding to the nuclear pore complex via the importin (karyopherin-) alpha and beta. Capsids are imported in intact form through the nuclear pore into the nuclear basket, where it probably binds NUP153. Only capsids that contain the mature viral genome can release the viral DNA and capsid protein into the nucleoplasm. Immature capsids get stuck in the basket. Capsids encapsulate the pre-genomic RNA and the P protein. Pre-genomic RNA is reverse-transcribed into DNA while the capsid is still in the cytoplasm. The capsid can then either be directed to the nucleus, providing more genomes for transcription, or bud through the endoplasmic reticulum to provide new virions. The protein is Capsid protein of Pan troglodytes (Chimpanzee).